The sequence spans 203 residues: Probable metallo-hydrolase MJ0296 (203 aa).

Zn(2+)-binding residues include His-86, His-88, Asp-90, His-91, His-135, Asp-152, and His-193.

The protein belongs to the metallo-beta-lactamase superfamily. Zn(2+) is required as a cofactor.

This chain is Probable metallo-hydrolase MJ0296, found in Methanocaldococcus jannaschii (strain ATCC 43067 / DSM 2661 / JAL-1 / JCM 10045 / NBRC 100440) (Methanococcus jannaschii).